Consider the following 319-residue polypeptide: Beta-ketoacyl-[acyl-carrier-protein] synthase III (319 aa).

Residues cysteine 115 and histidine 246 contribute to the active site. The interval 247-251 (QANLR) is ACP-binding. Residue asparagine 276 is part of the active site.

The protein belongs to the thiolase-like superfamily. FabH family. As to quaternary structure, homodimer.

It is found in the cytoplasm. The enzyme catalyses malonyl-[ACP] + acetyl-CoA + H(+) = 3-oxobutanoyl-[ACP] + CO2 + CoA. Its pathway is lipid metabolism; fatty acid biosynthesis. In terms of biological role, catalyzes the condensation reaction of fatty acid synthesis by the addition to an acyl acceptor of two carbons from malonyl-ACP. Catalyzes the first condensation reaction which initiates fatty acid synthesis and may therefore play a role in governing the total rate of fatty acid production. Possesses both acetoacetyl-ACP synthase and acetyl transacylase activities. Its substrate specificity determines the biosynthesis of branched-chain and/or straight-chain of fatty acids. The protein is Beta-ketoacyl-[acyl-carrier-protein] synthase III of Coxiella burnetii (strain RSA 493 / Nine Mile phase I).